We begin with the raw amino-acid sequence, 297 residues long: uncharacterized protein (297 aa).

Residue glutamate 46 is part of the active site.

This sequence belongs to the PhzF family. In terms of assembly, homodimer and homotetramer.

This is an uncharacterized protein from Salmonella typhimurium (strain LT2 / SGSC1412 / ATCC 700720).